The primary structure comprises 320 residues: Malate dehydrogenase (320 aa).

NAD(+)-binding positions include 10–15 (GAGQIG) and D34. Substrate contacts are provided by R83 and R89. NAD(+) contacts are provided by residues N96 and 119 to 121 (ITN). Substrate-binding residues include N121 and R152. Residue H176 is the Proton acceptor of the active site.

It belongs to the LDH/MDH superfamily. MDH type 3 family.

It catalyses the reaction (S)-malate + NAD(+) = oxaloacetate + NADH + H(+). In terms of biological role, catalyzes the reversible oxidation of malate to oxaloacetate. The chain is Malate dehydrogenase from Methylobacterium nodulans (strain LMG 21967 / CNCM I-2342 / ORS 2060).